The chain runs to 701 residues: Long chain acyl-CoA synthetase 6, peroxisomal (701 aa).

The propeptide at 1-38 (MDSSSSSSSAAARRRINAIHSHLVTSSRSSPLLRSNPT) is removed in mature form. Residues 15 to 23 (RINAIHSHL) carry the Microbody targeting signal motif. 266–277 (ICYTSGTTGTPK) serves as a coordination point for ATP. The fatty acid-binding stretch occupies residues 526–550 (DGWLHTGDIGLWLPGGRLKIIDRKK).

It belongs to the ATP-dependent AMP-binding enzyme family. It depends on Mg(2+) as a cofactor. As to expression, expressed in roots, stems, leaves flowers and germinating seedling. Preferentially expressed in seeds and senescent leaves.

The protein localises to the peroxisome. It is found in the glyoxysome membrane. It carries out the reaction a long-chain fatty acid + ATP + CoA = a long-chain fatty acyl-CoA + AMP + diphosphate. The catalysed reaction is tetradecanoate + ATP + CoA = tetradecanoyl-CoA + AMP + diphosphate. The enzyme catalyses hexadecanoate + ATP + CoA = hexadecanoyl-CoA + AMP + diphosphate. It catalyses the reaction (9Z)-octadecenoate + ATP + CoA = (9Z)-octadecenoyl-CoA + AMP + diphosphate. It carries out the reaction (9Z,12Z)-octadecadienoate + ATP + CoA = (9Z,12Z)-octadecadienoyl-CoA + AMP + diphosphate. The catalysed reaction is (9Z,12Z,15Z)-octadecatrienoate + ATP + CoA = (9Z,12Z,15Z)-octadecatrienoyl-CoA + AMP + diphosphate. Its pathway is lipid metabolism; fatty acid metabolism. Its function is as follows. Activation of long-chain fatty acids for both synthesis of cellular lipids, and degradation via beta-oxidation. Preferentially uses palmitate, palmitoleate, oleate, linoleate and eicosenoate as substrates. Can use myristate and linolenate as substrates. May play a regulatory role both in fatty acid import into glyoxysomes and in fatty acid beta-oxidation. Functions redundantly with LACS7 in lipid mobilization for beta-oxidation during seed germination, which is essential for postgerminative growth and seedling establishment. The sequence is that of Long chain acyl-CoA synthetase 6, peroxisomal from Arabidopsis thaliana (Mouse-ear cress).